The sequence spans 989 residues: Phosphoenolpyruvate carboxylase (989 aa).

Active-site residues include His-175 and Lys-630.

Belongs to the PEPCase type 1 family. Mg(2+) is required as a cofactor.

The enzyme catalyses oxaloacetate + phosphate = phosphoenolpyruvate + hydrogencarbonate. Functionally, forms oxaloacetate, a four-carbon dicarboxylic acid source for the tricarboxylic acid cycle. The sequence is that of Phosphoenolpyruvate carboxylase from Prochlorococcus marinus (strain MIT 9301).